The following is a 466-amino-acid chain: UDP-N-acetylmuramate--L-alanine ligase (466 aa).

114 to 120 serves as a coordination point for ATP; that stretch reads GTHGKTT.

The protein belongs to the MurCDEF family.

It localises to the cytoplasm. The enzyme catalyses UDP-N-acetyl-alpha-D-muramate + L-alanine + ATP = UDP-N-acetyl-alpha-D-muramoyl-L-alanine + ADP + phosphate + H(+). It participates in cell wall biogenesis; peptidoglycan biosynthesis. In terms of biological role, cell wall formation. In Chlorobium phaeobacteroides (strain DSM 266 / SMG 266 / 2430), this protein is UDP-N-acetylmuramate--L-alanine ligase.